The following is a 273-amino-acid chain: Phosphatidylglycerol--prolipoprotein diacylglyceryl transferase (273 aa).

3 consecutive transmembrane segments (helical) span residues 20 to 40 (LAVR…LPIA), 59 to 79 (FLFY…VLFY), and 97 to 117 (GGMS…YFSW). Arginine 142 is an a 1,2-diacyl-sn-glycero-3-phospho-(1'-sn-glycerol) binding site. 2 helical membrane-spanning segments follow: residues 206 to 226 (FGFL…FCEF) and 243 to 263 (MGQL…VYAM).

It belongs to the Lgt family.

The protein localises to the cell inner membrane. The catalysed reaction is L-cysteinyl-[prolipoprotein] + a 1,2-diacyl-sn-glycero-3-phospho-(1'-sn-glycerol) = an S-1,2-diacyl-sn-glyceryl-L-cysteinyl-[prolipoprotein] + sn-glycerol 1-phosphate + H(+). It functions in the pathway protein modification; lipoprotein biosynthesis (diacylglyceryl transfer). Functionally, catalyzes the transfer of the diacylglyceryl group from phosphatidylglycerol to the sulfhydryl group of the N-terminal cysteine of a prolipoprotein, the first step in the formation of mature lipoproteins. The chain is Phosphatidylglycerol--prolipoprotein diacylglyceryl transferase from Gluconobacter oxydans (strain 621H) (Gluconobacter suboxydans).